Reading from the N-terminus, the 622-residue chain is Low affinity potassium transport system protein Kup (622 aa).

A run of 12 helical transmembrane segments spans residues 9 to 29 (LPAI…TSPL), 49 to 69 (VFGF…IKYL), 103 to 123 (VIMG…TPAI), 137 to 157 (PQLD…LFMI), 165 to 185 (VGKL…GLGL), 213 to 233 (VSFI…ALYA), 247 to 267 (WFTV…ALLL), 276 to 296 (PFFL…AALA), 337 to 357 (IYIP…IVSF), 363 to 383 (LAAA…ILST), 396 to 416 (FVAL…TANL), and 419 to 439 (LLSG…VMTT).

Belongs to the HAK/KUP transporter (TC 2.A.72) family.

It localises to the cell inner membrane. The enzyme catalyses K(+)(in) + H(+)(in) = K(+)(out) + H(+)(out). In terms of biological role, responsible for the low-affinity transport of potassium into the cell. Likely operates as a K(+):H(+) symporter. In Escherichia coli (strain K12 / MC4100 / BW2952), this protein is Low affinity potassium transport system protein Kup.